The chain runs to 109 residues: Ribonuclease (109 aa).

Residue E72 is the Proton acceptor of the active site. H101 serves as the catalytic Proton donor.

The protein belongs to the ribonuclease N1/T1 family.

It is found in the secreted. Functionally, hydrolyzes phosphodiester bonds in RNA, poly- and oligoribonucleotides resulting in 3'-nucleoside monophosphates via 2',3'-cyclophosphate intermediates. This is Ribonuclease from Heyndrickxia coagulans (Weizmannia coagulans).